Reading from the N-terminus, the 236-residue chain is Biosynthetic peptidoglycan transglycosylase (236 aa).

Residues 20–40 (LVFIVLSVLILPYALIGLYLL) form a helical membrane-spanning segment.

This sequence belongs to the glycosyltransferase 51 family.

It localises to the cell inner membrane. The enzyme catalyses [GlcNAc-(1-&gt;4)-Mur2Ac(oyl-L-Ala-gamma-D-Glu-L-Lys-D-Ala-D-Ala)](n)-di-trans,octa-cis-undecaprenyl diphosphate + beta-D-GlcNAc-(1-&gt;4)-Mur2Ac(oyl-L-Ala-gamma-D-Glu-L-Lys-D-Ala-D-Ala)-di-trans,octa-cis-undecaprenyl diphosphate = [GlcNAc-(1-&gt;4)-Mur2Ac(oyl-L-Ala-gamma-D-Glu-L-Lys-D-Ala-D-Ala)](n+1)-di-trans,octa-cis-undecaprenyl diphosphate + di-trans,octa-cis-undecaprenyl diphosphate + H(+). It participates in cell wall biogenesis; peptidoglycan biosynthesis. Peptidoglycan polymerase that catalyzes glycan chain elongation from lipid-linked precursors. The protein is Biosynthetic peptidoglycan transglycosylase of Rhizobium meliloti (strain 1021) (Ensifer meliloti).